A 131-amino-acid chain; its full sequence is Large-conductance mechanosensitive channel (131 aa).

3 helical membrane-spanning segments follow: residues 8–28, 30–50, and 67–87; these read FAIR…GAFG, IVSS…LGGI, and GAFI…FLFV.

It belongs to the MscL family. Homopentamer.

The protein resides in the cell membrane. Functionally, channel that opens in response to stretch forces in the membrane lipid bilayer. May participate in the regulation of osmotic pressure changes within the cell. This Geobacillus thermodenitrificans (strain NG80-2) protein is Large-conductance mechanosensitive channel.